Consider the following 320-residue polypeptide: BTB and MATH domain-containing protein 36 (320 aa).

The MATH domain occupies 7-136 (KGSIRFEIQN…DKHAVLEVQI (130 aa)). The BTB domain occupies 160-227 (TDVVLVLEGK…IYPTHMLINS (68 aa)).

The polypeptide is BTB and MATH domain-containing protein 36 (bath-36) (Caenorhabditis elegans).